The following is a 169-amino-acid chain: MTAILITGYRSFEIGIFDHKDPRVSIIKQAIRKDLIGYLENGVDWFIFTGNLGFEQWALEVANELKEEYPLQIATIFLFETHGDKWNEKNQEVLSQFRAVDFVKYYFPNYEQPTQFSQYYQFLLEKTEGAYVFYDTENETNLKYFLKKAKDMPHYQLLLLTFDRLNDMS.

This sequence belongs to the UPF0398 family.

The protein is UPF0398 protein Spy49_1277c of Streptococcus pyogenes serotype M49 (strain NZ131).